Here is a 143-residue protein sequence, read N- to C-terminus: Histone H2AX (143 aa).

Residues 1-22 are disordered; the sequence is MSGRGKTGGKARAKAKSRSSRA. S2 is modified (N-acetylserine). A Phosphoserine modification is found at S2. Residues K6 and K10 each carry the N6-acetyllysine modification. The segment covering 7 to 19 has biased composition (basic residues); it reads TGGKARAKAKSRS. An N6-lactoyllysine; alternate modification is found at K10. Glycyl lysine isopeptide (Lys-Gly) (interchain with G-Cter in ubiquitin) cross-links involve residues K14 and K16. At K37 the chain carries N6-acetyllysine; by CREBBP and EP300. A Glycyl lysine isopeptide (Lys-Gly) (interchain with G-Cter in ubiquitin) cross-link involves residue K120. S121 and S122 each carry phosphoserine. Residues 121–143 form a disordered region; sequence SSATVGPKAPAVGKKASQASQEY. Residues K128 and K135 each participate in a glycyl lysine isopeptide (Lys-Gly) (interchain with G-Cter in SUMO2) cross-link. A Phosphoserine modification is found at S137. S140 bears the Phosphoserine; by ATM, ATR and PRKDC mark. Residues 140-141 carry the [ST]-Q motif motif; the sequence is SQ. Y143 is subject to Phosphotyrosine; by WSTF.

The protein belongs to the histone H2A family. The nucleosome is a histone octamer containing two molecules each of H2A, H2B, H3 and H4 assembled in one H3-H4 heterotetramer and two H2A-H2B heterodimers. The octamer wraps approximately 147 bp of DNA. Interacts with numerous proteins required for DNA damage signaling and repair when phosphorylated on Ser-140. These include MDC1, BRCA1 and the MRN complex, composed of MRE11, RAD50, and NBN. Interaction with the MRN complex is mediated at least in part by NBN. Also interacts with DHX9/NDHII when phosphorylated on Ser-140 and MCPH1 when phosphorylated at Ser-140 or Tyr-143. Interacts with ARRB2; the interaction is detected in the nucleus upon OR1D2 stimulation. Interacts with WRAP53/TCAB1. Interacts with TP53BP1. Interacts with HDGFL2. In terms of processing, phosphorylated on Ser-140 (to form gamma-H2AX or H2AX139ph) in response to DNA double strand breaks (DSBs) generated by exogenous genotoxic agents, by stalled replication forks, by meiotic recombination events and during immunoglobulin class switching in lymphocytes. Phosphorylation can extend up to several thousand nucleosomes from the actual site of the DSB and may mark the surrounding chromatin for recruitment of proteins required for DNA damage signaling and repair. Widespread phosphorylation may also serve to amplify the damage signal or aid repair of persistent lesions. Phosphorylation of Ser-140 (H2AX139ph) in response to ionizing radiation is mediated by both ATM and PRKDC while defects in DNA replication induce Ser-140 phosphorylation (H2AX139ph) subsequent to activation of ATR and PRKDC. Dephosphorylation of Ser-140 by PP2A is required for DNA DSB repair. In meiosis, Ser-140 phosphorylation (H2AX139ph) first occurs at synaptonemal complexes during leptotene and is an ATM-dependent response to the formation of programmed DSBs by SPO11. Ser-140 phosphorylation (H2AX139ph) subsequently occurs at unsynapsed regions of both autosomes and the XY bivalent during zygotene and is ATR- and BRCA1-dependent. Ser-140 phosphorylation (H2AX139ph) may also be required for transcriptional repression of unsynapsed chromatin and meiotic sex chromosome inactivation (MSCI), whereby the X and Y chromosomes condense in pachytene to form the heterochromatic XY-body. During immunoglobulin class switch recombination in lymphocytes, Ser-140 phosphorylation (H2AX139ph) at sites of DNA-recombination requires the activation-induced cytidine deaminase AICDA. Phosphorylation at Tyr-143 (H2AXY142ph) by BAZ1B/WSTF determines the relative recruitment of either DNA repair or pro-apoptotic factors. Phosphorylation at Tyr-143 (H2AXY142ph) favors the recruitment of APBB1/FE65 and pro-apoptosis factors such as MAPK8/JNK1, triggering apoptosis. In contrast, dephosphorylation of Tyr-143 by EYA proteins (EYA1, EYA2, EYA3 or EYA4) favors the recruitment of MDC1-containing DNA repair complexes to the tail of phosphorylated Ser-140 (H2AX139ph). Phosphorylated by VRK1. Post-translationally, monoubiquitination of Lys-120 (H2AXK119ub) by RING1 and RNF2/RING2 complex gives a specific tag for epigenetic transcriptional repression. Following DNA double-strand breaks (DSBs), it is ubiquitinated through 'Lys-63' linkage of ubiquitin moieties by the E2 ligase UBE2N and the E3 ligases RNF8 and RNF168, leading to the recruitment of repair proteins to sites of DNA damage. Ubiquitination at Lys-14 and Lys-16 (H2AK13Ub and H2AK15Ub, respectively) in response to DNA damage is initiated by RNF168 that mediates monoubiquitination at these 2 sites, and 'Lys-63'-linked ubiquitin are then conjugated to monoubiquitin; RNF8 is able to extend 'Lys-63'-linked ubiquitin chains in vitro. H2AK119Ub and ionizing radiation-induced 'Lys-63'-linked ubiquitination (H2AK13Ub and H2AK15Ub) are distinct events. Acetylation at Lys-6 (H2AXK5ac) by KAT5 component of the NuA4 histone acetyltransferase complex promotes NBN/NBS1 assembly at the sites of DNA damage. Acetylation at Lys-37 increases in S and G2 phases. This modification has been proposed to be important for DNA double-strand break repair. In terms of tissue distribution, most abundant in testis, thymus and spleen.

The protein localises to the nucleus. Its subcellular location is the chromosome. In terms of biological role, variant histone H2A which replaces conventional H2A in a subset of nucleosomes. Nucleosomes wrap and compact DNA into chromatin, limiting DNA accessibility to the cellular machineries which require DNA as a template. Histones thereby play a central role in transcription regulation, DNA repair, DNA replication and chromosomal stability. DNA accessibility is regulated via a complex set of post-translational modifications of histones, also called histone code, and nucleosome remodeling. Required for checkpoint-mediated arrest of cell cycle progression in response to low doses of ionizing radiation and for efficient repair of DNA double strand breaks (DSBs) specifically when modified by C-terminal phosphorylation. The polypeptide is Histone H2AX (Mus musculus (Mouse)).